Here is a 157-residue protein sequence, read N- to C-terminus: Ribosome maturation factor RimP (157 aa).

Belongs to the RimP family.

The protein localises to the cytoplasm. Required for maturation of 30S ribosomal subunits. This is Ribosome maturation factor RimP from Bacillus licheniformis (strain ATCC 14580 / DSM 13 / JCM 2505 / CCUG 7422 / NBRC 12200 / NCIMB 9375 / NCTC 10341 / NRRL NRS-1264 / Gibson 46).